Here is a 154-residue protein sequence, read N- to C-terminus: Ribonuclease H (154 aa).

Positions 1-141 (MKRIEAYTDG…ADELARAGME (141 aa)) constitute an RNase H type-1 domain. Mg(2+) is bound by residues Asp-9, Glu-47, Asp-69, and Asp-133.

The protein belongs to the RNase H family. In terms of assembly, monomer. Requires Mg(2+) as cofactor.

The protein resides in the cytoplasm. It carries out the reaction Endonucleolytic cleavage to 5'-phosphomonoester.. Endonuclease that specifically degrades the RNA of RNA-DNA hybrids. This is Ribonuclease H from Brucella abortus (strain 2308).